The following is a 150-amino-acid chain: Globin-2 (150 aa).

Positions 11 to 150 (PLSDAEKNKI…MICILLSSAY (140 aa)) constitute a Globin domain. 2 residues coordinate heme b: His74 and His106.

This sequence belongs to the globin family. In terms of assembly, monomer.

The sequence is that of Globin-2 from Mordacia mordax (Southern hemisphere lamprey).